The primary structure comprises 140 residues: MTSFRLANLTVFLVLLFCFMRGVHSADDLSKIPEIKGYELHCIEASGITESSAKKLRNGDDIASPDQSIKCYVQCFFSKLRLMNEKGVVQKDKVLSLLGKLMEEDKAKKLAEKCDLRRTNPCDTAYAMYDCYRQNKAKLL.

An N-terminal signal peptide occupies residues 1-25 (MTSFRLANLTVFLVLLFCFMRGVHS).

Belongs to the PBP/GOBP family. In terms of tissue distribution, high-level expression in female mouth parts, particularly in the proboscis (at protein level). Low-level expression in female antenna (at protein level). Female salivary gland. Female chemosensory organs: antenna, palp and proboscis. Male antenna, wing and maxillary palp. Expressed at higher levels in male tissues compared to female tissues. Not detected in midgut.

Its subcellular location is the secreted. Its function is as follows. Involved in modulation of blood-feeding behavior and capacity in female mosquitoes. Required for normal oviposition. Required for normal fecundity and fertility of female mosquitoes. Required for normal expression of VGA1 gene, which encodes the egg yolk protein vitellogenin-A1. Required for normal female longevity when mosquitoes are maintained on regular sugar meal. In terms of biological role, (Microbial infection) Facilitates shedding of dengue virus type 2 particles into mosquito saliva. Does not affect dengue virus type 2 replication or infection prevalence in midgut and salivary glands at 14 days after blood feeding. Functionally, (Microbial infection) Facilitates shedding of Zika virus particles into mosquito saliva. Does not affect Zika virus replication or infection prevalence in midgut and salivary glands at 14 days after blood feeding. This is Odorant-binding protein 10 from Aedes aegypti (Yellowfever mosquito).